Reading from the N-terminus, the 556-residue chain is Delta-1-pyrroline-5-carboxylate dehydrogenase, mitochondrial (556 aa).

A mitochondrion-targeting transit peptide spans 1 to 17; that stretch reads MLRARSAVSQSWKGFKT. NAD(+) is bound by residues K226 and 279–283; that span reads GSVPT. E307 functions as the Proton acceptor in the catalytic mechanism. The active-site Nucleophile is C341. E440 is an NAD(+) binding site. S506 provides a ligand contact to substrate.

The protein belongs to the aldehyde dehydrogenase family.

It is found in the mitochondrion matrix. It carries out the reaction L-glutamate 5-semialdehyde + NAD(+) + H2O = L-glutamate + NADH + 2 H(+). Its pathway is amino-acid degradation; L-proline degradation into L-glutamate; L-glutamate from L-proline: step 2/2. In terms of biological role, irreversible conversion of delta-1-pyrroline-5-carboxylate (P5C), derived either from proline or ornithine, to glutamate. This is a necessary step in the pathway interconnecting the urea and tricarboxylic acid cycles. This Danio rerio (Zebrafish) protein is Delta-1-pyrroline-5-carboxylate dehydrogenase, mitochondrial (aldh4a1).